A 148-amino-acid chain; its full sequence is Large ribosomal subunit protein bL9 (148 aa).

It belongs to the bacterial ribosomal protein bL9 family.

Binds to the 23S rRNA. This Campylobacter concisus (strain 13826) protein is Large ribosomal subunit protein bL9.